The primary structure comprises 132 residues: Large ribosomal subunit protein eL28 (132 aa).

The protein belongs to the eukaryotic ribosomal protein eL28 family.

The protein is Large ribosomal subunit protein eL28 (rpl28) of Dictyostelium discoideum (Social amoeba).